Reading from the N-terminus, the 382-residue chain is Porin-like protein BU359 (382 aa).

The first 23 residues, 1-23 (MTNRKSLAMVIPMLLAASNGVNA), serve as a signal peptide directing secretion.

It belongs to the Gram-negative porin family. In terms of assembly, homotrimer.

The protein localises to the cell outer membrane. Functionally, forms pores that allow passive diffusion of small molecules across the membrane. In Buchnera aphidicola subsp. Acyrthosiphon pisum (strain APS) (Acyrthosiphon pisum symbiotic bacterium), this protein is Porin-like protein BU359.